Consider the following 245-residue polypeptide: Outer dense fiber protein 1 (245 aa).

A phosphoserine mark is found at S5 and S10. Copy 1 of the repeat occupies 34-38 (RCLCD). The interval 34 to 78 (RCLCDLYMHPYCCCDLHPYPYCLCYSKRSRSCGLCDLYYPCCLCD) is 2 X 5 AA repeats of [RC]-C-L-C-D. S64 is subject to Phosphoserine. Repeat unit 2 spans residues 74-78 (CCLCD). Phosphoserine occurs at positions 87, 108, 109, 137, 153, 175, and 180. Residues 195–233 (CNPCNPCSPCSPCGPCGPCGPCGPCGPCGPCDPCNPCYP) are C-X-P repeat region.

Interacts (via leucine zipper motif) with TCP11. Interacts with SPAG4. Interacts with KLC3. Interacts with CCDC42. Testis. Specifically located to the round spermatid layer and to the luminally-oriented cytoplasm of elongated spermatids.

It localises to the cell projection. The protein localises to the cilium. It is found in the flagellum. Its subcellular location is the cytoplasm. The protein resides in the cytoskeleton. It localises to the microtubule organizing center. The protein localises to the centrosome. Component of the outer dense fibers (ODF) of spermatozoa. ODF are filamentous structures located on the outside of the axoneme in the midpiece and principal piece of the mammalian sperm tail and may help to maintain the passive elastic structures and elastic recoil of the sperm tail. The protein is Outer dense fiber protein 1 (Odf1) of Rattus norvegicus (Rat).